The primary structure comprises 99 residues: Integration host factor subunit alpha (99 aa).

It belongs to the bacterial histone-like protein family. As to quaternary structure, heterodimer of an alpha and a beta chain.

This protein is one of the two subunits of integration host factor, a specific DNA-binding protein that functions in genetic recombination as well as in transcriptional and translational control. This is Integration host factor subunit alpha from Psychrobacter cryohalolentis (strain ATCC BAA-1226 / DSM 17306 / VKM B-2378 / K5).